The following is a 257-amino-acid chain: tRNA pseudouridine synthase A (257 aa).

Asp-53 (nucleophile) is an active-site residue. Residue Tyr-111 coordinates substrate.

It belongs to the tRNA pseudouridine synthase TruA family. Homodimer.

It carries out the reaction uridine(38/39/40) in tRNA = pseudouridine(38/39/40) in tRNA. Formation of pseudouridine at positions 38, 39 and 40 in the anticodon stem and loop of transfer RNAs. This Xanthomonas oryzae pv. oryzae (strain MAFF 311018) protein is tRNA pseudouridine synthase A.